The following is a 91-amino-acid chain: Putative defensin-like protein 83 (91 aa).

The first 27 residues, 1–27 (MATNKFLSILLLSLMAFAAILLPMISG), serve as a signal peptide directing secretion. Disulfide bonds link C32/C71, C37/C57, C43/C69, and C47/C70.

The protein belongs to the DEFL family.

The protein resides in the secreted. The protein is Putative defensin-like protein 83 (LCR46) of Arabidopsis thaliana (Mouse-ear cress).